A 152-amino-acid polypeptide reads, in one-letter code: 3-hydroxyacyl-[acyl-carrier-protein] dehydratase FabZ (152 aa).

His-58 is an active-site residue.

The protein belongs to the thioester dehydratase family. FabZ subfamily.

It is found in the cytoplasm. It catalyses the reaction a (3R)-hydroxyacyl-[ACP] = a (2E)-enoyl-[ACP] + H2O. Its function is as follows. Involved in unsaturated fatty acids biosynthesis. Catalyzes the dehydration of short chain beta-hydroxyacyl-ACPs and long chain saturated and unsaturated beta-hydroxyacyl-ACPs. This chain is 3-hydroxyacyl-[acyl-carrier-protein] dehydratase FabZ, found in Synechococcus sp. (strain RCC307).